A 142-amino-acid polypeptide reads, in one-letter code: Group IIE secretory phospholipase A2 (142 aa).

A signal peptide spans 1-19 (MKSPHVLVFLCLLVALVTG). Residues Asp41, Gly43, Tyr45, Gly47, and Gly49 each contribute to the Ca(2+) site. 7 disulfides stabilise this stretch: Cys44–Cys135, Cys46–Cys62, Cys61–Cys115, Cys67–Cys142, Cys68–Cys108, Cys77–Cys101, and Cys95–Cys106. Residue His65 is part of the active site. Asp66 provides a ligand contact to Ca(2+). Asp109 is a catalytic residue. Ca(2+) contacts are provided by Tyr130 and Asn132.

Belongs to the phospholipase A2 family. Ca(2+) serves as cofactor. In terms of tissue distribution, restricted to the brain, heart, lung, and placenta.

It is found in the secreted. The protein localises to the cytoplasm. It catalyses the reaction a 1,2-diacyl-sn-glycero-3-phosphoethanolamine + H2O = a 1-acyl-sn-glycero-3-phosphoethanolamine + a fatty acid + H(+). The catalysed reaction is 1-hexadecanoyl-2-(9Z-octadecenoyl)-sn-glycero-3-phosphoethanolamine + H2O = 1-hexadecanoyl-sn-glycero-3-phosphoethanolamine + (9Z)-octadecenoate + H(+). It carries out the reaction 1-hexadecanoyl-2-(9Z,12Z-octadecadienoyl)-sn-glycero-3-phosphoethanolamine + H2O = 1-hexadecanoyl-sn-glycero-3-phosphoethanolamine + (9Z,12Z)-octadecadienoate + H(+). The enzyme catalyses 1-hexadecanoyl-2-(5Z,8Z,11Z,14Z-eicosatetraenoyl)-sn-glycero-3-phosphoethanolamine + H2O = 1-hexadecanoyl-sn-glycero-3-phosphoethanolamine + (5Z,8Z,11Z,14Z)-eicosatetraenoate + H(+). It catalyses the reaction 1,2-dihexadecanoyl-sn-glycero-3-phospho-(1'-sn-glycerol) + H2O = 1-hexadecanoyl-sn-glycero-3-phospho-(1'-sn-glycerol) + hexadecanoate + H(+). The catalysed reaction is 1-hexadecanoyl-2-(9Z-octadecenoyl)-sn-glycero-3-phosphoglycerol + H2O = 1-hexadecanoyl-sn-glycero-3-phosphoglycerol + (9Z)-octadecenoate + H(+). It carries out the reaction a 1,2-diacyl-sn-glycero-3-phosphocholine + H2O = a 1-acyl-sn-glycero-3-phosphocholine + a fatty acid + H(+). The enzyme catalyses 1,2-dihexadecanoyl-sn-glycero-3-phosphocholine + H2O = 1-hexadecanoyl-sn-glycero-3-phosphocholine + hexadecanoate + H(+). It catalyses the reaction 1-hexadecanoyl-2-(9Z-octadecenoyl)-sn-glycero-3-phosphocholine + H2O = 1-hexadecanoyl-sn-glycero-3-phosphocholine + (9Z)-octadecenoate + H(+). The catalysed reaction is 1-hexadecanoyl-2-(9Z,12Z-octadecadienoyl)-sn-glycero-3-phosphocholine + H2O = (9Z,12Z)-octadecadienoate + 1-hexadecanoyl-sn-glycero-3-phosphocholine + H(+). It carries out the reaction 1-hexadecanoyl-2-(4Z,7Z,10Z,13Z,16Z,19Z-docosahexaenoyl)-sn-glycero-3-phosphocholine + H2O = (4Z,7Z,10Z,13Z,16Z,19Z)-docosahexaenoate + 1-hexadecanoyl-sn-glycero-3-phosphocholine + H(+). Secretory calcium-dependent phospholipase A2 that primarily targets extracellular phospholipids. Hydrolyzes the ester bond of the fatty acyl group attached at sn-2 position of phospholipids (phospholipase A2 activity), releasing various unsaturated fatty acids including oleoate, linoleoate, arachidonate, docosahexaenoate and lysophosphatidylethanolamines in preference to lysophosphatidylcholines. In response to high-fat diet, hydrolyzes minor lipoprotein phospholipids including phosphatidylserines, phosphatidylinositols and phosphatidylglycerols, altering lipoprotein composition and fat storage in adipose tissue and liver. May act in an autocrine and paracrine manner. Contributes to lipid remodeling of cellular membranes and generation of lipid mediators involved in pathogen clearance. Cleaves sn-2 fatty acyl chains of phosphatidylglycerols and phosphatidylethanolamines, which are major components of membrane phospholipids in bacteria. Acts as a hair follicle phospholipase A2. Selectively releases lysophosphatidylethanolamines (LPE) and various unsaturated fatty acids in skin to regulate hair follicle homeostasis. May regulate the inflammatory response by releasing arachidonate, a precursor of prostaglandins and leukotrienes. Upon allergen exposure, may participate in allergic inflammatory response by enhancing leukotriene C4 synthesis and degranulation in mast cells. The chain is Group IIE secretory phospholipase A2 (PLA2G2E) from Homo sapiens (Human).